Here is a 280-residue protein sequence, read N- to C-terminus: Ribosomal RNA small subunit methyltransferase A (280 aa).

Residues His15, Leu17, Gly42, Glu64, Asp89, and Asn109 each contribute to the S-adenosyl-L-methionine site.

It belongs to the class I-like SAM-binding methyltransferase superfamily. rRNA adenine N(6)-methyltransferase family. RsmA subfamily.

The protein resides in the cytoplasm. It catalyses the reaction adenosine(1518)/adenosine(1519) in 16S rRNA + 4 S-adenosyl-L-methionine = N(6)-dimethyladenosine(1518)/N(6)-dimethyladenosine(1519) in 16S rRNA + 4 S-adenosyl-L-homocysteine + 4 H(+). Functionally, specifically dimethylates two adjacent adenosines (A1518 and A1519) in the loop of a conserved hairpin near the 3'-end of 16S rRNA in the 30S particle. May play a critical role in biogenesis of 30S subunits. In Prochlorococcus marinus (strain MIT 9303), this protein is Ribosomal RNA small subunit methyltransferase A.